A 433-amino-acid polypeptide reads, in one-letter code: Serine--tRNA ligase (433 aa).

Residue 235–237 participates in L-serine binding; sequence TSE. An ATP-binding site is contributed by 266-268; sequence RSE. E289 contributes to the L-serine binding site. An ATP-binding site is contributed by 353 to 356; that stretch reads EISS. Residue S388 coordinates L-serine.

The protein belongs to the class-II aminoacyl-tRNA synthetase family. Type-1 seryl-tRNA synthetase subfamily. In terms of assembly, homodimer. The tRNA molecule binds across the dimer.

The protein localises to the cytoplasm. The enzyme catalyses tRNA(Ser) + L-serine + ATP = L-seryl-tRNA(Ser) + AMP + diphosphate + H(+). The catalysed reaction is tRNA(Sec) + L-serine + ATP = L-seryl-tRNA(Sec) + AMP + diphosphate + H(+). The protein operates within aminoacyl-tRNA biosynthesis; selenocysteinyl-tRNA(Sec) biosynthesis; L-seryl-tRNA(Sec) from L-serine and tRNA(Sec): step 1/1. Functionally, catalyzes the attachment of serine to tRNA(Ser). Is also able to aminoacylate tRNA(Sec) with serine, to form the misacylated tRNA L-seryl-tRNA(Sec), which will be further converted into selenocysteinyl-tRNA(Sec). The chain is Serine--tRNA ligase from Burkholderia ambifaria (strain MC40-6).